The chain runs to 266 residues: Vitamin B12-binding protein (266 aa).

Residues 1 to 22 (MVKQMFRALVALLLTLPVWLYA) form the signal peptide. The Fe/B12 periplasmic-binding domain maps to 25–266 (RVITLSPANT…QLCNALSQVN (242 aa)). Cyanocob(III)alamin is bound by residues Tyr-50 and 242–246 (DWFER). Cysteines 183 and 259 form a disulfide.

Belongs to the BtuF family. As to quaternary structure, the complex is composed of two ATP-binding proteins (BtuD), two transmembrane proteins (BtuC) and a solute-binding protein (BtuF).

The protein resides in the periplasm. Part of the ABC transporter complex BtuCDF involved in vitamin B12 import. Binds vitamin B12 and delivers it to the periplasmic surface of BtuC. The polypeptide is Vitamin B12-binding protein (Salmonella choleraesuis (strain SC-B67)).